The sequence spans 463 residues: Exodeoxyribonuclease 7 large subunit (463 aa).

This sequence belongs to the XseA family. Heterooligomer composed of large and small subunits.

The protein localises to the cytoplasm. The catalysed reaction is Exonucleolytic cleavage in either 5'- to 3'- or 3'- to 5'-direction to yield nucleoside 5'-phosphates.. Functionally, bidirectionally degrades single-stranded DNA into large acid-insoluble oligonucleotides, which are then degraded further into small acid-soluble oligonucleotides. The sequence is that of Exodeoxyribonuclease 7 large subunit from Bordetella pertussis (strain Tohama I / ATCC BAA-589 / NCTC 13251).